Reading from the N-terminus, the 313-residue chain is Ribosomal protein L11 methyltransferase (313 aa).

S-adenosyl-L-methionine contacts are provided by threonine 163, glycine 184, aspartate 206, and asparagine 249.

Belongs to the methyltransferase superfamily. PrmA family.

Its subcellular location is the cytoplasm. The enzyme catalyses L-lysyl-[protein] + 3 S-adenosyl-L-methionine = N(6),N(6),N(6)-trimethyl-L-lysyl-[protein] + 3 S-adenosyl-L-homocysteine + 3 H(+). Methylates ribosomal protein L11. This Brevibacillus brevis (strain 47 / JCM 6285 / NBRC 100599) protein is Ribosomal protein L11 methyltransferase.